The sequence spans 68 residues: Frenatin-3 (68 aa).

The N-terminal stretch at 1–22 (MHFLKKSIFLVLFLGLVSLSIC) is a signal peptide. Residues 23–46 (EKEKREDQNEEEVDENEEESEEKR) constitute a propeptide that is removed on maturation. The tract at residues 26 to 47 (KREDQNEEEVDENEEESEEKRG) is disordered. A compositionally biased stretch (acidic residues) spans 30-42 (QNEEEVDENEEES).

The protein belongs to the frog skin active peptide (FSAP) family. Frenatin subfamily. In terms of tissue distribution, expressed by the granular skin glands.

The protein resides in the secreted. Its function is as follows. Antimicrobial peptide with activity against both Gram-positive and Gram-negative bacteria. Antibacterial activities have been tested against Bacillus cereus (MIC=12.5 ug/ml), Escherichia coli (MIC=50 ug/ml), Leuconostoc mesenteroides (MIC=25 ug/ml), Micrococcus luteus (MIC=1.5 ug/ml), Pastewella haemolytica (MIC=0.8 ug/ml), Staphylococcus aureus (MIC&lt;l00 ug/ml), Streptococcus faecalis (MIC&lt;150 ug/ml) and Streptococcus uberis (MIC=50 ug/ml). Strongly inhibits the formation of NO by neuronal nitric oxide synthase (nNOS) at micromolar concentrations. Acts by a non-competitive mechanism, probably by binding to calcium/calmodulin and as a consequence blocking calmodulin attachment to nNOS. The protein is Frenatin-3 of Nyctimystes infrafrenatus (White-lipped tree frog).